A 464-amino-acid chain; its full sequence is Glutamate--tRNA ligase 1 (464 aa).

Positions 8 to 18 (PSPTGHLHVGG) match the 'HIGH' region motif. Positions 231–235 (PLSKR) match the 'KMSKS' region motif. Lysine 234 contributes to the ATP binding site.

Belongs to the class-I aminoacyl-tRNA synthetase family. Glutamate--tRNA ligase type 1 subfamily. As to quaternary structure, monomer.

Its subcellular location is the cytoplasm. The catalysed reaction is tRNA(Glu) + L-glutamate + ATP = L-glutamyl-tRNA(Glu) + AMP + diphosphate. Functionally, catalyzes the attachment of glutamate to tRNA(Glu) in a two-step reaction: glutamate is first activated by ATP to form Glu-AMP and then transferred to the acceptor end of tRNA(Glu). This chain is Glutamate--tRNA ligase 1, found in Thermotoga sp. (strain RQ2).